The sequence spans 242 residues: Small ribosomal subunit protein uS3 (242 aa).

One can recognise a KH type-2 domain in the interval 39–110; it reads IRRFIHKKYG…QVRINVVEVE (72 aa). The interval 216–242 is disordered; the sequence is QSMPVGASPRRRGNRRPQQFEDRSNEG. Residues 233 to 242 are compositionally biased toward basic and acidic residues; it reads QQFEDRSNEG.

This sequence belongs to the universal ribosomal protein uS3 family. Part of the 30S ribosomal subunit. Forms a tight complex with proteins S10 and S14.

Its function is as follows. Binds the lower part of the 30S subunit head. Binds mRNA in the 70S ribosome, positioning it for translation. The protein is Small ribosomal subunit protein uS3 of Prochlorococcus marinus (strain MIT 9303).